The following is a 429-amino-acid chain: MKKQNNLRSLAAQAVELVVEQGQSLSNVLPPLQQKVADKDKALLQELCFGVLRTLSQLEWLINKLMSRPMTGKQRTVHYLIMVGFYQLLYTRVPPHAALAETVEGAVAIKRPQLKGLINGVLRQFQRQQETLLNEFATSDARFLHPGWLVKRLQNAYPTQWQHIIEANNQRPPMWLRVNRTHHTRDGWLGLLEDAGMKGYPHPDYPDAVRLETPAPVHALPGFAEGWVTVQDASAQGCAVFLAPQNGEHILDLCAAPGGKTTHILEVAPEADVLAVDIDEQRLSRVYDNLKRLGMKATVKQGDGRYPAQWCGEQQFDRILLDAPCSATGVIRRHPDIKWLRRDRDIAELAQLQAEILDAVWPRLKPGGTLVYATCSVLPEENRDQIKTFLQRTPDAALSETGTPDQPGQQNLPGGEEGDGFFYAKLIKK.

Residues 254–260 (CAAPGGK), Asp277, Asp303, and Asp322 contribute to the S-adenosyl-L-methionine site. The active-site Nucleophile is Cys375. The tract at residues 397–419 (ALSETGTPDQPGQQNLPGGEEGD) is disordered. The segment covering 400–412 (ETGTPDQPGQQNL) has biased composition (polar residues).

Belongs to the class I-like SAM-binding methyltransferase superfamily. RsmB/NOP family.

The protein localises to the cytoplasm. It catalyses the reaction cytidine(967) in 16S rRNA + S-adenosyl-L-methionine = 5-methylcytidine(967) in 16S rRNA + S-adenosyl-L-homocysteine + H(+). Functionally, specifically methylates the cytosine at position 967 (m5C967) of 16S rRNA. This chain is Ribosomal RNA small subunit methyltransferase B, found in Salmonella enteritidis PT4 (strain P125109).